Here is a 229-residue protein sequence, read N- to C-terminus: Cytidylate kinase (229 aa).

12–20 (GPSGTGKSS) serves as a coordination point for ATP.

It belongs to the cytidylate kinase family. Type 1 subfamily.

The protein resides in the cytoplasm. The catalysed reaction is CMP + ATP = CDP + ADP. It carries out the reaction dCMP + ATP = dCDP + ADP. In Rhodococcus jostii (strain RHA1), this protein is Cytidylate kinase.